The primary structure comprises 308 residues: Ribosomal RNA small subunit methyltransferase H (308 aa).

Residues 36 to 38 (GGH), Asp55, Phe86, Asp103, and Gln110 contribute to the S-adenosyl-L-methionine site.

The protein belongs to the methyltransferase superfamily. RsmH family.

It localises to the cytoplasm. It catalyses the reaction cytidine(1402) in 16S rRNA + S-adenosyl-L-methionine = N(4)-methylcytidine(1402) in 16S rRNA + S-adenosyl-L-homocysteine + H(+). In terms of biological role, specifically methylates the N4 position of cytidine in position 1402 (C1402) of 16S rRNA. The chain is Ribosomal RNA small subunit methyltransferase H from Helicobacter pylori (strain G27).